Here is a 534-residue protein sequence, read N- to C-terminus: Origin of replication complex subunit 5 (534 aa).

Positions 1-36 are disordered; that stretch reads MPPKEESSKVTRRSTRSSASVTVENSEPIESHTPTI. 83–90 lines the ATP pocket; it reads GGASTGKT. The short motif at 129–136 is the Nuclear localization signal element; sequence HRKCSLNG. Positions 397–428 are disordered; it reads MFDSTGGMDNRKRKRKASEKSMEKKEIAEQEA. The segment covering 414–424 has biased composition (basic and acidic residues); the sequence is SEKSMEKKEIA.

Belongs to the ORC5 family. Component of the origin recognition complex (ORC) composed of at least ORC1 (ORC1A or ORC1B), ORC2, ORC3, ORC4, ORC5 and ORC6. ORC is regulated in a cell-cycle and development dependent manner. It is sequentially assembled at the exit from anaphase of mitosis and disassembled as cells enter S phase. Interacts directly with ORC1A, ORC1B, ORC2, ORC3, ORC4 and ORC6. In terms of tissue distribution, follow a cell-cycle regulation with a peak at the G1/S-phase. Mostly expressed in flower buds and cauline leaves, and, to a lower exent, in roots, leaves and stems. Expressed at low levels ubiquitously.

It is found in the nucleus. In terms of biological role, component of the origin recognition complex (ORC) that binds origins of replication. DNA-binding is ATP-dependent. The specific DNA sequences that define origins of replication have not been identified yet. ORC is required to assemble the pre-replication complex necessary to initiate DNA replication. This chain is Origin of replication complex subunit 5, found in Arabidopsis thaliana (Mouse-ear cress).